The chain runs to 290 residues: Ubiquinone biosynthesis protein COQ4, mitochondrial (290 aa).

Residues 1–32 constitute a mitochondrion transit peptide; it reads MAKRVCVGDLRKLAGSVSTPSRCILPPHARCF. Positions 168, 169, 172, and 184 each coordinate Zn(2+). The segment at 260–290 is disordered; the sequence is KPPDLREMRKAEREAQKKDKEAKETMTRAAV.

This sequence belongs to the COQ4 family. Component of a multi-subunit COQ enzyme complex, composed of at least COQ3, COQ4, COQ5, COQ6, COQ7 and COQ9. The cofactor is Zn(2+).

It localises to the mitochondrion inner membrane. The enzyme catalyses a 4-hydroxy-3-methoxy-5-(all-trans-polyprenyl)benzoate + H(+) = a 2-methoxy-6-(all-trans-polyprenyl)phenol + CO2. It participates in cofactor biosynthesis; ubiquinone biosynthesis. Functionally, lyase that catalyzes the C1-decarboxylation of 4-hydroxy-3-methoxy-5-(all-trans-polyprenyl)benzoic acid into 2-methoxy-6-(all-trans-polyprenyl)phenol during ubiquinone biosynthesis. The chain is Ubiquinone biosynthesis protein COQ4, mitochondrial from Phaeosphaeria nodorum (strain SN15 / ATCC MYA-4574 / FGSC 10173) (Glume blotch fungus).